A 209-amino-acid polypeptide reads, in one-letter code: Large ribosomal subunit protein uL4 (209 aa).

Residues 46–71 (GTSSTKTRSEVRGSSKKPWKQKGTGR) form a disordered region. Basic residues predominate over residues 59-71 (SSKKPWKQKGTGR).

This sequence belongs to the universal ribosomal protein uL4 family. As to quaternary structure, part of the 50S ribosomal subunit.

In terms of biological role, one of the primary rRNA binding proteins, this protein initially binds near the 5'-end of the 23S rRNA. It is important during the early stages of 50S assembly. It makes multiple contacts with different domains of the 23S rRNA in the assembled 50S subunit and ribosome. Functionally, forms part of the polypeptide exit tunnel. This Borrelia garinii subsp. bavariensis (strain ATCC BAA-2496 / DSM 23469 / PBi) (Borreliella bavariensis) protein is Large ribosomal subunit protein uL4.